The sequence spans 278 residues: D-arabinitol 2-dehydrogenase [ribulose-forming] (278 aa).

2 residues coordinate NADP(+): Leu28 and Asn49. The active-site Proton donor is Ser166. Positions 181, 185, 214, and 216 each coordinate NADP(+). Tyr181 functions as the Proton acceptor in the catalytic mechanism. The active-site Lowers pKa of active site Tyr is Lys185.

Belongs to the short-chain dehydrogenases/reductases (SDR) family.

It carries out the reaction D-arabinitol + NAD(+) = D-ribulose + NADH + H(+). The protein operates within carbohydrate metabolism; D-arabinitol metabolism. This chain is D-arabinitol 2-dehydrogenase [ribulose-forming] (ARDH), found in Scheffersomyces stipitis (strain ATCC 58785 / CBS 6054 / NBRC 10063 / NRRL Y-11545) (Yeast).